Reading from the N-terminus, the 195-residue chain is Glutathione S-transferase class-mu 26 kDa isozyme (195 aa).

One can recognise a GST N-terminal domain in the interval 1 to 83 (MAPKLGYWKI…YIADKHNMLG (83 aa)). Glutathione-binding positions include 7 to 8 (YW), 41 to 45 (WRNEK), 54 to 55 (NL), and 67 to 68 (QS). The GST C-terminal domain occupies 85-195 (CPKERAEISM…TFGGGDAPPK (111 aa)). Substrate is bound at residue Y111.

The protein belongs to the GST superfamily. Mu family. As to quaternary structure, homodimer.

It catalyses the reaction RX + glutathione = an S-substituted glutathione + a halide anion + H(+). Its function is as follows. Conjugation of reduced glutathione to a wide number of exogenous and endogenous hydrophobic electrophiles. Functionally, GST isoenzymes appear to play a central role in the parasite detoxification system. Other functions are also suspected including a role in increasing the solubility of haematin in the parasite gut. The polypeptide is Glutathione S-transferase class-mu 26 kDa isozyme (Schistosoma mansoni (Blood fluke)).